The following is a 325-amino-acid chain: Probable cell division protein WhiA (325 aa).

Residues 273 to 306 (SLEELGALADPPLTKDAVAGRIRRLLALADKRAN) constitute a DNA-binding region (H-T-H motif).

The protein belongs to the WhiA family.

Functionally, involved in cell division and chromosome segregation. The sequence is that of Probable cell division protein WhiA from Frankia alni (strain DSM 45986 / CECT 9034 / ACN14a).